Consider the following 374-residue polypeptide: MSMADQLQIPADIKPRDGRFGCGPSKVRPEQLQALSTTAAPLFGTSHRQAPVKNLVGRLRSGLAELFSLPDGYQVILGNGGATAFWDAAAFGLIDKRSLHLSYGEFSSKFAAAVAKNPFVGDPVVIKSDAGSAPEPQSDPSVDLIAWAHNETSTGVAVPVRRPADSGDALVAIDATSGAGGLPVDIGETDAYYFSPQKNFAGDGGLWLALMSPAALARVESIAASGRWVPDFLSLPIAVENSLKDQTYNTPAIGTLALMAEQVDWMLGNGGLDWAVKRTADSAGRLYSWAEERDYTTPFVADPKLRSQVVGTIDLVDDVDAAAVAKILRANGVVDTEPYRKLGRNQLRVGMFPAVDPDDVSALTQCVDWVVERL.

Arg48 provides a ligand contact to L-glutamate. Residues 82 to 83 (AT), Phe106, Thr152, Asp174, and Gln197 each bind pyridoxal 5'-phosphate. Lys198 bears the N6-(pyridoxal phosphate)lysine mark. A pyridoxal 5'-phosphate-binding site is contributed by 249–250 (NT).

Belongs to the class-V pyridoxal-phosphate-dependent aminotransferase family. SerC subfamily. In terms of assembly, homodimer. The cofactor is pyridoxal 5'-phosphate.

The protein resides in the cytoplasm. The enzyme catalyses O-phospho-L-serine + 2-oxoglutarate = 3-phosphooxypyruvate + L-glutamate. The catalysed reaction is 4-(phosphooxy)-L-threonine + 2-oxoglutarate = (R)-3-hydroxy-2-oxo-4-phosphooxybutanoate + L-glutamate. The protein operates within amino-acid biosynthesis; L-serine biosynthesis; L-serine from 3-phospho-D-glycerate: step 2/3. It functions in the pathway cofactor biosynthesis; pyridoxine 5'-phosphate biosynthesis; pyridoxine 5'-phosphate from D-erythrose 4-phosphate: step 3/5. Its function is as follows. Catalyzes the reversible conversion of 3-phosphohydroxypyruvate to phosphoserine and of 3-hydroxy-2-oxo-4-phosphonooxybutanoate to phosphohydroxythreonine. The chain is Putative phosphoserine aminotransferase from Mycobacterium avium (strain 104).